The following is a 326-amino-acid chain: Protein TMED8 (326 aa).

The disordered stretch occupies residues 1–80 (MSDLQAAEGP…VSPGSKDATE (80 aa)). Residues 160–324 (PPCIWTFAKV…NKTLYFHIYY (165 aa)) form the GOLD domain. Residue Lys170 is modified to N6-acetyllysine. Residues 238-268 (DSCDDEDEEEEEEEEIEEPVPAGDVERGSRS) form a disordered region. Residues 239-255 (SCDDEDEEEEEEEEIEE) show a composition bias toward acidic residues.

This chain is Protein TMED8 (TMED8), found in Pongo abelii (Sumatran orangutan).